A 537-amino-acid polypeptide reads, in one-letter code: Zinc finger protein 703 (537 aa).

Disordered regions lie at residues 1 to 38 (MNCSPPGSSTDTERQSSSSGTPVAPRPTLAPTHPLRQA), 90 to 254 (SQIG…VAPV), and 300 to 323 (VGNQLPGTLGLPGKPPSSSPLTGA). Residues 101 to 111 (SKLNSVTSSGL) are compositionally biased toward polar residues. Low complexity predominate over residues 149-158 (GSSSGGAADK). The span at 176-185 (SPSSRVSSPG) shows a compositional bias: polar residues. The span at 188-203 (CDSKNNESQEKKEPEA) shows a compositional bias: basic and acidic residues. Residues 205–220 (KANSETSQVNPTLTRA) are compositionally biased toward polar residues. Low complexity predominate over residues 221-232 (STSNSSAESSQS). A C2H2-type zinc finger spans residues 409 to 437 (HICNWVSASGPCDKRFSTSEELLAHLRTH).

The protein belongs to the Elbow/Noc family.

It localises to the nucleus. Its subcellular location is the cytoplasm. Transcriptional corepressor which does not bind directly to DNA and may regulate transcription through recruitment of histone deacetylases to gene promoters. Regulates cell adhesion, migration and proliferation. Involved in specification of the lateral neural plate border (NPB). May be required for segmental gene expression during hindbrain development. The chain is Zinc finger protein 703 (znf703) from Xenopus tropicalis (Western clawed frog).